We begin with the raw amino-acid sequence, 432 residues long: D-amino acid dehydrogenase (432 aa).

3–17 (VVILGSGVVGVTSAW) contacts FAD.

This sequence belongs to the DadA oxidoreductase family. The cofactor is FAD.

The protein resides in the cell inner membrane. It carries out the reaction a D-alpha-amino acid + A + H2O = a 2-oxocarboxylate + AH2 + NH4(+). It participates in amino-acid degradation; D-alanine degradation; NH(3) and pyruvate from D-alanine: step 1/1. In terms of biological role, oxidative deamination of D-amino acids. The sequence is that of D-amino acid dehydrogenase from Salmonella typhi.